We begin with the raw amino-acid sequence, 841 residues long: Alpha-glucuronidase A (841 aa).

Positions methionine 1–alanine 20 are cleaved as a signal peptide. N-linked (GlcNAc...) asparagine glycosylation is found at asparagine 51, asparagine 76, asparagine 149, asparagine 222, asparagine 279, asparagine 310, asparagine 343, asparagine 450, asparagine 465, asparagine 527, asparagine 576, asparagine 682, asparagine 723, and asparagine 732.

The protein belongs to the glycosyl hydrolase 67 family.

It localises to the secreted. It carries out the reaction an alpha-D-glucuronoside + H2O = D-glucuronate + an alcohol. Alpha-glucuronidase involved in the hydrolysis of xylan, a major structural heterogeneous polysaccharide found in plant biomass representing the second most abundant polysaccharide in the biosphere, after cellulose. Releases 4-O-methylglucuronic acid from xylan. This Aspergillus tubingensis protein is Alpha-glucuronidase A (aguA).